The following is a 1837-amino-acid chain: Zinc finger SWIM domain-containing protein 8 (1837 aa).

Phosphoserine occurs at positions 36, 48, and 53. The tract at residues 45–65 (RKQSAGPNSPTGGGGGGGSGG) is disordered. Residues 55–65 (TGGGGGGGSGG) are compositionally biased toward gly residues. The SWIM-type zinc finger occupies 172–208 (YNVAVMFDRCRVTSCSCTCGAGAKWCTHVVALCLFRI). S437 is modified (phosphoserine). Disordered regions lie at residues 514-727 (SRPG…EEDD), 803-823 (NPPD…KVST), and 1016-1232 (SQTH…VPNQ). 2 stretches are compositionally biased toward basic and acidic residues: residues 523–532 (GLEESRDRPR) and 566–575 (LSAEGGDKAL). Position 567 is a phosphoserine (S567). Residues 579–602 (GPGGGKAKALGGAGSGSKGSAGGG) are compositionally biased toward gly residues. The span at 1019 to 1040 (HKPQTLSSFYSSSRPTTASQRS) shows a compositional bias: polar residues. Residues 1119 to 1130 (SRGGYNGRGWGS) show a composition bias toward gly residues. Residue T1139 is modified to Phosphothreonine. Residues 1144–1159 (IDSSAPETTSDSSPTL) show a composition bias toward polar residues. Phosphoserine occurs at positions 1153, 1156, and 1160. The segment covering 1174–1209 (GRGQDSDSISSSSSDSLGSSSSSGSRRASASGGARA) has biased composition (low complexity). Over residues 1210–1226 (KTVEVGRYKGRRPESHA) the composition is skewed to basic and acidic residues. S1267 carries the phosphoserine modification. Disordered stretches follow at residues 1442 to 1464 (SASG…GGPG) and 1635 to 1656 (QPSP…SQPV). Positions 1447–1464 (RAGGEAGRGMPEGRGGPG) are enriched in gly residues. S1836 is subject to Phosphoserine.

It belongs to the ZSWIM8 family. As to quaternary structure, component of the SCF-like E3 ubiquitin-protein ligase complex which contains CUL3, RBX1, ELOB, ELOC and ZSWIM8. In terms of assembly, (Microbial infection) Interacts with Zika virus protein NS5; this interaction allows STAT2 binding and subsequent proteasomal degradation.

It is found in the cytoplasm. The protein localises to the cytosol. Its pathway is protein modification; protein ubiquitination. Its function is as follows. Substrate recognition component of a SCF-like E3 ubiquitin-protein ligase complex that promotes target-directed microRNA degradation (TDMD), a process that mediates degradation of microRNAs (miRNAs). The SCF-like E3 ubiquitin-protein ligase complex acts by catalyzing ubiquitination and subsequent degradation of AGO proteins (AGO1, AGO2, AGO3 and/or AGO4), thereby exposing miRNAs for degradation. Specifically recognizes and binds AGO proteins when they are engaged with a TDMD target. May also act as a regulator of axon guidance: specifically recognizes misfolded ROBO3 and promotes its ubiquitination and subsequent degradation. Plays an essential role for proper embryonic development of heart and lung. Controls protein quality of DAB1, a key signal molecule for brain development, thus protecting its signaling strength. Mechanistically, recognizes intrinsically disordered regions of DAB1 and eliminates misfolded DAB1 that cannot be properly phosphorylated. (Microbial infection) Participates in Zika virus inhibition of IFN signaling by acting as a scaffold protein to connect ZSWIM8/CUL3 ligase complex and STAT2, leading to STAT2 degradation. The chain is Zinc finger SWIM domain-containing protein 8 from Homo sapiens (Human).